A 190-amino-acid chain; its full sequence is Corticoliberin (190 aa).

Residues 1–24 (MRLPLLVSVGVLLVALLPSPPCRA) form the signal peptide. Positions 25–147 (LLSRGPIPGA…QEAPAARKRR (123 aa)) are excised as a propeptide. Disordered regions lie at residues 33-53 (GARQ…LPQP) and 115-151 (PRRP…SQEP). Positions 41 to 53 (PQPLSFFQPLPQP) are enriched in low complexity. A188 carries the post-translational modification Alanine amide.

It belongs to the sauvagine/corticotropin-releasing factor/urotensin I family. In terms of assembly, interacts (via C-terminus) with CRFR1 (via N-terminal extracellular domain). Produced by the hypothalamus.

It localises to the secreted. Its function is as follows. Hormone regulating the release of corticotropin from pituitary gland. Induces NLRP6 in intestinal epithelial cells, hence may influence gut microbiota profile. In Ovis aries (Sheep), this protein is Corticoliberin (CRH).